An 83-amino-acid polypeptide reads, in one-letter code: Translation initiation factor IF-1 (83 aa).

The S1-like domain maps to 1–72; that stretch reads MAKEELIEMQ…SKGRITFRHL (72 aa).

This sequence belongs to the IF-1 family. Component of the 30S ribosomal translation pre-initiation complex which assembles on the 30S ribosome in the order IF-2 and IF-3, IF-1 and N-formylmethionyl-tRNA(fMet); mRNA recruitment can occur at any time during PIC assembly.

Its subcellular location is the cytoplasm. Its function is as follows. One of the essential components for the initiation of protein synthesis. Stabilizes the binding of IF-2 and IF-3 on the 30S subunit to which N-formylmethionyl-tRNA(fMet) subsequently binds. Helps modulate mRNA selection, yielding the 30S pre-initiation complex (PIC). Upon addition of the 50S ribosomal subunit IF-1, IF-2 and IF-3 are released leaving the mature 70S translation initiation complex. The sequence is that of Translation initiation factor IF-1 from Verminephrobacter eiseniae (strain EF01-2).